We begin with the raw amino-acid sequence, 513 residues long: uncharacterized protein (513 aa).

Transmembrane regions (helical) follow at residues 3–23, 47–67, 71–91, 129–149, 153–173, 177–197, 233–253, 273–293, 320–340, 374–394, 395–415, 424–444, and 462–482; these read MTAF…TYFA, LAIA…GMIA, FDGF…LYIV, TFYM…LLGL, AAVL…GMIA, VQII…IIVF, ETLS…HILI, WIIG…AAFV, FLFA…VTGL, ASVA…SLNV, AFLV…LIVF, ASGA…LVSM, and LIPL…GAWL.

Belongs to the sodium:solute symporter (SSF) (TC 2.A.21) family.

The protein localises to the cell membrane. This is an uncharacterized protein from Bacillus subtilis (strain 168).